The following is a 239-amino-acid chain: 1-(5-phosphoribosyl)-5-[(5-phosphoribosylamino)methylideneamino] imidazole-4-carboxamide isomerase (239 aa).

Residue aspartate 8 is the Proton acceptor of the active site. The active-site Proton donor is aspartate 130.

This sequence belongs to the HisA/HisF family.

Its subcellular location is the cytoplasm. The catalysed reaction is 1-(5-phospho-beta-D-ribosyl)-5-[(5-phospho-beta-D-ribosylamino)methylideneamino]imidazole-4-carboxamide = 5-[(5-phospho-1-deoxy-D-ribulos-1-ylimino)methylamino]-1-(5-phospho-beta-D-ribosyl)imidazole-4-carboxamide. Its pathway is amino-acid biosynthesis; L-histidine biosynthesis; L-histidine from 5-phospho-alpha-D-ribose 1-diphosphate: step 4/9. This chain is 1-(5-phosphoribosyl)-5-[(5-phosphoribosylamino)methylideneamino] imidazole-4-carboxamide isomerase, found in Lachnoclostridium phytofermentans (strain ATCC 700394 / DSM 18823 / ISDg) (Clostridium phytofermentans).